The sequence spans 406 residues: Probable endo-xylogalacturonan hydrolase A (406 aa).

A signal peptide spans Met1 to Ala18. A glycan (N-linked (GlcNAc...) asparagine) is linked at Asn84. PbH1 repeat units follow at residues Ala183–Glu213 and Ser214–Pro235. Catalysis depends on Asp228, which acts as the Proton donor. His251 is an active-site residue. PbH1 repeat units lie at residues Val266–Pro289, Val299–Ser320, and Pro333–Gly375. 2 N-linked (GlcNAc...) asparagine glycosylation sites follow: Asn278 and Asn301.

This sequence belongs to the glycosyl hydrolase 28 family.

The protein localises to the secreted. Pectinolytic enzyme involved in the degradation of xylogalacturonan (xga), a galacturonan backbone heavily substituted with xylose, and which is one important component of the hairy regions of pectin. Activity requires a galacturonic acid backbone substituted with xylose. In Aspergillus niger (strain ATCC MYA-4892 / CBS 513.88 / FGSC A1513), this protein is Probable endo-xylogalacturonan hydrolase A (xghA).